We begin with the raw amino-acid sequence, 362 residues long: MGNIFGHLFRISTFGESHGGGVGVVIDGCPPQLEISAEEIQVELDRRRPGQSKITTPRKEADTCEIISGVFEGKTLGTPITILVRNQDTRPQDYDEMAQKYRPSHADATYDAKYGIRNWQGGGRSSARETIGRVAAGAIAKKILRQVANVEIIAYVKRIKDLEGVVDPNTVTLEQVESNIVRCPDAECGDRMIELIEQIGRQGDSIGGVVECVARNVPKGLGEPVFDKLEADIAKGVMSLPASKGFEIGSGFAGTLLTGIEHNDEFYIDQNDEIRTVTNRSGGIQGGISNGENIILRVAFKPTATIRKEQKTVTREGEETLLAAKGRHDPCVLPRAVPMVEAMVALVLCDHLLRHHGQCKVL.

Arg-47 is a binding site for NADP(+). Residues 124 to 126, Gly-286, 301 to 305, and Arg-327 contribute to the FMN site; these read RSS and KPTAT.

Belongs to the chorismate synthase family. In terms of assembly, homotetramer. The cofactor is FMNH2.

It catalyses the reaction 5-O-(1-carboxyvinyl)-3-phosphoshikimate = chorismate + phosphate. It functions in the pathway metabolic intermediate biosynthesis; chorismate biosynthesis; chorismate from D-erythrose 4-phosphate and phosphoenolpyruvate: step 7/7. Functionally, catalyzes the anti-1,4-elimination of the C-3 phosphate and the C-6 proR hydrogen from 5-enolpyruvylshikimate-3-phosphate (EPSP) to yield chorismate, which is the branch point compound that serves as the starting substrate for the three terminal pathways of aromatic amino acid biosynthesis. This reaction introduces a second double bond into the aromatic ring system. The protein is Chorismate synthase of Nostoc punctiforme (strain ATCC 29133 / PCC 73102).